Consider the following 373-residue polypeptide: MTEVLWPAVPNGTDTAFLADPGSPWGNSTVTSTAAVASPFKCALTKTGFQFYYLPAVYILVFIIGFLGNSVAIWMFVFHMKPWSGISVYMFNLALADFLYVLTLPALIFYYFNKTDWIFGDAMCKLQRFIFHVNLYGSILFLTCISAHRYSGVVYPLKSLGRLKKKNAVYISVLVWLIVVVGISPILFYSGTGIRKNKTITCYDTTSDEYLRSYFIYSMCTTVAMFCVPLVLILGCYGLIVRALIYKDLDNSPLRRKSIYLVIIVLTVFAVSYIPFHVMKTMNLRARLDFQTPEMCAFNDRVYATYQVTRGLASLNSCVDPILYFLAGDTFRRRLSRATRKASRRSEANLQSKSEDMTLNILSEFKQNGDTSL.

At 1–51 (MTEVLWPAVPNGTDTAFLADPGSPWGNSTVTSTAAVASPFKCALTKTGFQF) the chain is on the extracellular side. 2 N-linked (GlcNAc...) asparagine glycosylation sites follow: N11 and N27. 2 cysteine pairs are disulfide-bonded: C42-C296 and C124-C202. An ADP-binding site is contributed by K46. A helical membrane pass occupies residues 52–74 (YYLPAVYILVFIIGFLGNSVAIW). The Cytoplasmic segment spans residues 75 to 87 (MFVFHMKPWSGIS). A helical transmembrane segment spans residues 88-109 (VYMFNLALADFLYVLTLPALIF). The Extracellular portion of the chain corresponds to 110–125 (YYFNKTDWIFGDAMCK). N-linked (GlcNAc...) asparagine glycosylation is present at N113. A helical membrane pass occupies residues 126 to 147 (LQRFIFHVNLYGSILFLTCISA). Topologically, residues 148 to 166 (HRYSGVVYPLKSLGRLKKK) are cytoplasmic. The helical transmembrane segment at 167–188 (NAVYISVLVWLIVVVGISPILF) threads the bilayer. Over 189 to 214 (YSGTGIRKNKTITCYDTTSDEYLRSY) the chain is Extracellular. An N-linked (GlcNAc...) asparagine glycan is attached at N197. 203–205 (YDT) is a binding site for ADP. Residues 215–237 (FIYSMCTTVAMFCVPLVLILGCY) form a helical membrane-spanning segment. Over 238–260 (GLIVRALIYKDLDNSPLRRKSIY) the chain is Cytoplasmic. Residues 261-284 (LVIIVLTVFAVSYIPFHVMKTMNL) traverse the membrane as a helical segment. ADP contacts are provided by residues 283–287 (NLRAR), 303–306 (YATY), and R310. Residues 285 to 303 (RARLDFQTPEMCAFNDRVY) lie on the Extracellular side of the membrane. A helical transmembrane segment spans residues 304 to 325 (ATYQVTRGLASLNSCVDPILYF). The Cytoplasmic segment spans residues 326–373 (LAGDTFRRRLSRATRKASRRSEANLQSKSEDMTLNILSEFKQNGDTSL).

This sequence belongs to the G-protein coupled receptor 1 family.

It localises to the cell membrane. Functionally, receptor for extracellular adenine nucleotides such as ADP. In platelets, binding to ADP leads to mobilization of intracellular calcium ions via activation of phospholipase C, a change in platelet shape, and ultimately platelet aggregation. The protein is P2Y purinoceptor 1 (P2RY1) of Bos taurus (Bovine).